Reading from the N-terminus, the 393-residue chain is MNDVFLKALPVLQKLTTAGFEAYFVGGSVRDYLLNRPISDVDIATSAFPEEVKEIFQSTYDTGIAHGTVTVRENKECYEVTTFRTEGTYEDFRRPSEVTFIRSLEEDLLRRDFTMNAIAMDENFKLHDPFSGQLAIQNKEIKAVGKASERFHEDALRMMRAVRFLSQLDFQLDKETETALTNQIALLQHTSVERITVEWIKMIKGQAVKRAIDLLLKVEMETYLPGFKGEKSALMEFASWNWEKRTTETAIWLGLVIAVKPSNITAFLKAWKLPNKTIQLVNKAYEAALNMKETWLTEELYHAQEAVFLLVNEINNIRGQSDKEDELKKAYELLPIHSKKDLAITGADLLKWTGENAGPWVKETLDKVECQVLLGKINNEKNQIKRWLGYHEE.

Residues Gly-27 and Arg-30 each coordinate ATP. CTP is bound by residues Gly-27 and Arg-30. Mg(2+)-binding residues include Asp-40 and Asp-42. Residues Arg-111, Asp-154, Arg-157, Arg-160, and Arg-163 each coordinate ATP. CTP-binding residues include Arg-111, Asp-154, Arg-157, Arg-160, and Arg-163.

This sequence belongs to the tRNA nucleotidyltransferase/poly(A) polymerase family. Bacterial CCA-adding enzyme type 3 subfamily. In terms of assembly, homodimer. It depends on Mg(2+) as a cofactor.

The enzyme catalyses a tRNA precursor + 2 CTP + ATP = a tRNA with a 3' CCA end + 3 diphosphate. It catalyses the reaction a tRNA with a 3' CCA end + 2 CTP + ATP = a tRNA with a 3' CCACCA end + 3 diphosphate. In terms of biological role, catalyzes the addition and repair of the essential 3'-terminal CCA sequence in tRNAs without using a nucleic acid template. Adds these three nucleotides in the order of C, C, and A to the tRNA nucleotide-73, using CTP and ATP as substrates and producing inorganic pyrophosphate. tRNA 3'-terminal CCA addition is required both for tRNA processing and repair. Also involved in tRNA surveillance by mediating tandem CCA addition to generate a CCACCA at the 3' terminus of unstable tRNAs. While stable tRNAs receive only 3'-terminal CCA, unstable tRNAs are marked with CCACCA and rapidly degraded. In Listeria innocua serovar 6a (strain ATCC BAA-680 / CLIP 11262), this protein is CCA-adding enzyme.